The following is a 135-amino-acid chain: MGSKIVQVFLMLALFATSALAQAPAPTPTATPPPATPPPVATPPPVATPPPAATPAPATPPPAATPAPATTPPSVAPSPADVPTASPPAPEGPTVSPSSAPGPSDASPAPSAAFSNKAFFAGTAFAAIMYAAVLA.

Positions 1–21 (MGSKIVQVFLMLALFATSALA) are cleaved as a signal peptide. Pyrrolidone carboxylic acid is present on glutamine 22. The disordered stretch occupies residues 22–112 (QAPAPTPTAT…PSDASPAPSA (91 aa)). Residues proline 24, proline 26, proline 28, proline 32, proline 33, proline 34, proline 37, proline 38, and proline 39 each carry the 4-hydroxyproline modification. Residues proline 24, proline 26, proline 28, proline 32, proline 33, proline 34, proline 37, proline 38, and proline 39 are each glycosylated (O-linked (Ara...) hydroxyproline). A compositionally biased stretch (pro residues) spans 25-76 (APTPTATPPPATPPPVATPPPVATPPPAATPAPATPPPAATPAPATTPPSVA). Low complexity predominate over residues 96–112 (SPSSAPGPSDASPAPSA). A lipid anchor (GPI-anchor amidated serine) is attached at serine 111. The propeptide at 112 to 135 (AAFSNKAFFAGTAFAAIMYAAVLA) is removed in mature form.

Belongs to the classical AGP family. In terms of processing, O-glycosylated on hydroxyprolines; noncontiguous hydroxylproline residues are glycosylated with arabinogalactan. Highly expressed in roots, flowers and leaves.

It localises to the cell membrane. Functionally, proteoglycan that seems to be implicated in diverse developmental roles such as differentiation, cell-cell recognition, embryogenesis and programmed cell death. In Arabidopsis thaliana (Mouse-ear cress), this protein is Classical arabinogalactan protein 4 (AGP4).